A 401-amino-acid chain; its full sequence is Argininosuccinate synthase (401 aa).

ATP is bound by residues alanine 9–serine 17 and alanine 35. Tyrosine 86 is a binding site for L-citrulline. Residue glycine 116 participates in ATP binding. L-aspartate is bound by residues threonine 118, asparagine 122, and aspartate 123. Asparagine 122 contacts L-citrulline. 5 residues coordinate L-citrulline: arginine 126, serine 175, serine 184, glutamate 261, and tyrosine 273.

Belongs to the argininosuccinate synthase family. Type 1 subfamily. Homotetramer.

The protein resides in the cytoplasm. It carries out the reaction L-citrulline + L-aspartate + ATP = 2-(N(omega)-L-arginino)succinate + AMP + diphosphate + H(+). It participates in amino-acid biosynthesis; L-arginine biosynthesis; L-arginine from L-ornithine and carbamoyl phosphate: step 2/3. The polypeptide is Argininosuccinate synthase (Aquifex aeolicus (strain VF5)).